A 485-amino-acid polypeptide reads, in one-letter code: Aldehyde dehydrogenase family 3 member A2 (485 aa).

Topologically, residues 1-463 are cytoplasmic; the sequence is MEREVQRVRQ…FLLRRFNKEK (463 aa). 185 to 190 contributes to the NAD(+) binding site; sequence GNTAVG. Active-site residues include E207 and C241. Residue S293 is modified to Phosphoserine. A helical transmembrane segment spans residues 464–484; that stretch reads LGLLVLTFLGIVAAVLVNAGY. Positions 481–484 match the Prevents secretion from ER motif; it reads NAGY.

Belongs to the aldehyde dehydrogenase family. Homodimer.

The protein localises to the microsome membrane. It localises to the endoplasmic reticulum membrane. The enzyme catalyses an aldehyde + NAD(+) + H2O = a carboxylate + NADH + 2 H(+). It carries out the reaction a fatty aldehyde + NAD(+) + H2O = a fatty acid + NADH + 2 H(+). The catalysed reaction is (2E)-hexadecenal + NAD(+) + H2O = (E)-hexadec-2-enoate + NADH + 2 H(+). It catalyses the reaction hexadecanoate + NADH + 2 H(+) = hexadecanal + NAD(+) + H2O. The enzyme catalyses 22-oxodocosanoate + NAD(+) + H2O = docosanedioate + NADH + 2 H(+). It carries out the reaction 2,6,10,14-tetramethylpentadecanal + NAD(+) + H2O = 2,6,10,14-tetramethylpentadecanoate + NADH + 2 H(+). The catalysed reaction is octadecanal + NAD(+) + H2O = octadecanoate + NADH + 2 H(+). It catalyses the reaction dodecanoate + NADH + 2 H(+) = dodecanal + NAD(+) + H2O. The enzyme catalyses decanal + NAD(+) + H2O = decanoate + NADH + 2 H(+). It carries out the reaction tetradecanal + NAD(+) + H2O = tetradecanoate + NADH + 2 H(+). The catalysed reaction is octanal + NAD(+) + H2O = octanoate + NADH + 2 H(+). It catalyses the reaction heptanal + NAD(+) + H2O = heptanoate + NADH + 2 H(+). The enzyme catalyses (2E,6E)-farnesal + NAD(+) + H2O = (2E,6E)-farnesoate + NADH + 2 H(+). Its function is as follows. Catalyzes the oxidation of medium and long-chain aliphatic aldehydes to fatty acids. Active on a variety of saturated and unsaturated aliphatic aldehydes between 6 and 24 carbons in length. Responsible for conversion of the sphingosine 1-phosphate (S1P) degradation product hexadecenal to hexadecenoic acid. This Macaca fascicularis (Crab-eating macaque) protein is Aldehyde dehydrogenase family 3 member A2 (ALDH3A2).